A 661-amino-acid chain; its full sequence is UvrABC system protein B (661 aa).

One can recognise a Helicase ATP-binding domain in the interval 25-182 (AGLNSKKRSQ…SDLVNLQYER (158 aa)). Residue 38–45 (GITGSGKT) participates in ATP binding. The Beta-hairpin motif lies at 91 to 114 (YYDYYQPEAYIARTDTFIEKDSSI). Residues 430-592 (QVEDLISEIQ…IIPQTINRTI (163 aa)) enclose the Helicase C-terminal domain. A UVR domain is found at 621-656 (KAHIYKLKKAMLKAASNLEFEQATKLRDQLKNLEEA).

The protein belongs to the UvrB family. As to quaternary structure, forms a heterotetramer with UvrA during the search for lesions. Interacts with UvrC in an incision complex.

Its subcellular location is the cytoplasm. Functionally, the UvrABC repair system catalyzes the recognition and processing of DNA lesions. A damage recognition complex composed of 2 UvrA and 2 UvrB subunits scans DNA for abnormalities. Upon binding of the UvrA(2)B(2) complex to a putative damaged site, the DNA wraps around one UvrB monomer. DNA wrap is dependent on ATP binding by UvrB and probably causes local melting of the DNA helix, facilitating insertion of UvrB beta-hairpin between the DNA strands. Then UvrB probes one DNA strand for the presence of a lesion. If a lesion is found the UvrA subunits dissociate and the UvrB-DNA preincision complex is formed. This complex is subsequently bound by UvrC and the second UvrB is released. If no lesion is found, the DNA wraps around the other UvrB subunit that will check the other stand for damage. The polypeptide is UvrABC system protein B (Rickettsia canadensis (strain McKiel)).